The primary structure comprises 119 residues: MPTPHTFSRELRLLTPEHFKRVFAEPVRAASPQITLLACPNTLEHPRLGLAVPKKALKRAVWRNRVKRVVRESFRLNQASLPAIDIVVIAKGGVKEMDNEELFKLLEKLWRTLSRRCNG.

The protein belongs to the RnpA family. In terms of assembly, consists of a catalytic RNA component (M1 or rnpB) and a protein subunit.

It catalyses the reaction Endonucleolytic cleavage of RNA, removing 5'-extranucleotides from tRNA precursor.. Functionally, RNaseP catalyzes the removal of the 5'-leader sequence from pre-tRNA to produce the mature 5'-terminus. It can also cleave other RNA substrates such as 4.5S RNA. The protein component plays an auxiliary but essential role in vivo by binding to the 5'-leader sequence and broadening the substrate specificity of the ribozyme. The polypeptide is Ribonuclease P protein component (Aeromonas salmonicida (strain A449)).